The following is a 181-amino-acid chain: Early upstream open reading frame (181 aa).

It belongs to the EUO family.

The chain is Early upstream open reading frame from Chlamydia caviae (strain ATCC VR-813 / DSM 19441 / 03DC25 / GPIC) (Chlamydophila caviae).